The following is a 242-amino-acid chain: UPF0309 protein BMEA_B0892 (242 aa).

In terms of domain architecture, SIS spans 30–214 (AADLIAAAAR…ARLVGEGDAP (185 aa)).

Belongs to the UPF0309 family.

This is UPF0309 protein BMEA_B0892 from Brucella melitensis biotype 2 (strain ATCC 23457).